The following is a 731-amino-acid chain: 1,4-alpha-glucan branching enzyme GlgB (731 aa).

The active-site Nucleophile is the Asp-411. Residue Glu-464 is the Proton donor of the active site.

Belongs to the glycosyl hydrolase 13 family. GlgB subfamily. In terms of assembly, monomer.

It catalyses the reaction Transfers a segment of a (1-&gt;4)-alpha-D-glucan chain to a primary hydroxy group in a similar glucan chain.. Its pathway is glycan biosynthesis; glycogen biosynthesis. Catalyzes the formation of the alpha-1,6-glucosidic linkages in glycogen by scission of a 1,4-alpha-linked oligosaccharide from growing alpha-1,4-glucan chains and the subsequent attachment of the oligosaccharide to the alpha-1,6 position. The polypeptide is 1,4-alpha-glucan branching enzyme GlgB (Mycobacterium ulcerans (strain Agy99)).